A 695-amino-acid chain; its full sequence is Probable glutamine--tRNA ligase (695 aa).

A 'HIGH' region motif is present at residues 201-211 (PEPNGILHIGH). Residues 202-204 (EPN) and 208-214 (HIGHAKA) each bind ATP. L-glutamine-binding residues include Asp234 and Tyr391. Residues Thr410, 439 to 440 (RL), and 447 to 449 (LSK) contribute to the ATP site. The 'KMSKS' region motif lies at 446 to 450 (VLSKR).

This sequence belongs to the class-I aminoacyl-tRNA synthetase family.

It carries out the reaction tRNA(Gln) + L-glutamine + ATP = L-glutaminyl-tRNA(Gln) + AMP + diphosphate. The polypeptide is Probable glutamine--tRNA ligase (Vairimorpha ceranae (strain BRL01) (Microsporidian parasite)).